The following is a 174-amino-acid chain: Chorismate pyruvate-lyase (174 aa).

Residues Met36, Arg78, Leu116, and Glu157 each contribute to the substrate site.

The protein belongs to the UbiC family. In terms of assembly, monomer.

It localises to the cytoplasm. The catalysed reaction is chorismate = 4-hydroxybenzoate + pyruvate. It participates in cofactor biosynthesis; ubiquinone biosynthesis. In terms of biological role, removes the pyruvyl group from chorismate, with concomitant aromatization of the ring, to provide 4-hydroxybenzoate (4HB) for the ubiquinone pathway. In Serratia proteamaculans (strain 568), this protein is Chorismate pyruvate-lyase.